The sequence spans 567 residues: Pyrethroid hydrolase Ces2e (567 aa).

An N-terminal signal peptide occupies residues 1–36 (MAQTRAWKSIMPLESLPGWLNAVVWGLLLLFCQVQG). Gln-37 bears the Pyrrolidone carboxylic acid mark. Residues Cys-105 and Cys-132 are joined by a disulfide bond. Catalysis depends on Ser-237, which acts as the Acyl-ester intermediate. Cys-289 and Cys-300 form a disulfide bridge. Residues Glu-354 and His-465 each act as charge relay system in the active site.

The protein belongs to the type-B carboxylesterase/lipase family. As to expression, expressed in liver.

The protein localises to the microsome. The enzyme catalyses all-trans-retinyl hexadecanoate + H2O = all-trans-retinol + hexadecanoate + H(+). It carries out the reaction (-)-trans-permethrin + H2O = (3-phenoxyphenyl)methanol + (1S,3R)-3-(2,2-dichlorovinyl)-2,2-dimethylcyclopropanecarboxylate + H(+). In terms of biological role, carboxylesterase that catalyzes the hydrolysis of pyrethroids pesticides. Hydrolyzes trans-permethrin at a rate about 22-fold higher than cis-permethrin. Also hydrolyzes trans-cypermethrin. Hydrolyzes retinyl esters. The protein is Pyrethroid hydrolase Ces2e of Rattus norvegicus (Rat).